A 607-amino-acid polypeptide reads, in one-letter code: DNA mismatch repair protein MutL (607 aa).

It belongs to the DNA mismatch repair MutL/HexB family.

In terms of biological role, this protein is involved in the repair of mismatches in DNA. It is required for dam-dependent methyl-directed DNA mismatch repair. May act as a 'molecular matchmaker', a protein that promotes the formation of a stable complex between two or more DNA-binding proteins in an ATP-dependent manner without itself being part of a final effector complex. The chain is DNA mismatch repair protein MutL from Paramagnetospirillum magneticum (strain ATCC 700264 / AMB-1) (Magnetospirillum magneticum).